The chain runs to 473 residues: Aspartyl/glutamyl-tRNA(Asn/Gln) amidotransferase subunit B (473 aa).

The protein belongs to the GatB/GatE family. GatB subfamily. In terms of assembly, heterotrimer of A, B and C subunits.

The enzyme catalyses L-glutamyl-tRNA(Gln) + L-glutamine + ATP + H2O = L-glutaminyl-tRNA(Gln) + L-glutamate + ADP + phosphate + H(+). It catalyses the reaction L-aspartyl-tRNA(Asn) + L-glutamine + ATP + H2O = L-asparaginyl-tRNA(Asn) + L-glutamate + ADP + phosphate + 2 H(+). Its function is as follows. Allows the formation of correctly charged Asn-tRNA(Asn) or Gln-tRNA(Gln) through the transamidation of misacylated Asp-tRNA(Asn) or Glu-tRNA(Gln) in organisms which lack either or both of asparaginyl-tRNA or glutaminyl-tRNA synthetases. The reaction takes place in the presence of glutamine and ATP through an activated phospho-Asp-tRNA(Asn) or phospho-Glu-tRNA(Gln). The chain is Aspartyl/glutamyl-tRNA(Asn/Gln) amidotransferase subunit B from Wolbachia sp. subsp. Drosophila simulans (strain wRi).